We begin with the raw amino-acid sequence, 474 residues long: Vitamin D-binding protein (474 aa).

The signal sequence occupies residues 1 to 16; that stretch reads MKRVLVLLLAVAFGHA. 3 Albumin domains span residues 17 to 208, 209 to 394, and 395 to 474; these read LERG…QLKH, LSLL…LLKK, and ELSS…KNIL. Cystine bridges form between cysteine 29–cysteine 75, cysteine 74–cysteine 83, cysteine 96–cysteine 112, cysteine 111–cysteine 122, cysteine 145–cysteine 190, cysteine 189–cysteine 198, cysteine 220–cysteine 266, cysteine 265–cysteine 273, cysteine 286–cysteine 300, cysteine 299–cysteine 311, cysteine 335–cysteine 376, cysteine 375–cysteine 384, cysteine 407–cysteine 453, and cysteine 452–cysteine 462.

It belongs to the ALB/AFP/VDB family. As to quaternary structure, associates with membrane-bound immunoglobulin on the surface of B-lymphocytes and with IgG Fc receptor on the membranes of T-lymphocytes. Interacts with LRP2; the interaction is required for renal uptake of GC in complex with 25-hydroxyvitamin D3. Allele GC*1S is O-glycosylated at Thr-436. The trisaccharide sugar moiety can be modified by the successive removal of neuraminic acid and galactose leaving an O-mceeN-acetyl-galactosamine. This conversion is thought to produce a macrophage-activating factor (Gc-MAF). Only a minor proportion of plasma GC is O-glycosylated. The potential N-glycosylation site predicted at Asn-288 is thought to be nonglycosylated. Expressed in the liver. Found in plasma, ascites, cerebrospinal fluid and urine.

It is found in the secreted. Functionally, involved in vitamin D transport and storage, scavenging of extracellular G-actin, enhancement of the chemotactic activity of C5 alpha for neutrophils in inflammation and macrophage activation. This chain is Vitamin D-binding protein (GC), found in Homo sapiens (Human).